A 193-amino-acid polypeptide reads, in one-letter code: Holliday junction branch migration complex subunit RuvA (193 aa).

Residues 1–64 are domain I; that stretch reads MIGRIAGILL…EDAHLLYGFL (64 aa). The tract at residues 65-139 is domain II; it reads TQQERTTFRE…GKLGADLGAL (75 aa). Residues 139–143 are flexible linker; it reads LAGAA. The segment at 144–193 is domain III; it reads SPSDHATDILNALLALGYSEKEGLAAIKNVPAGTGVSEGIKLALKALSKA.

The protein belongs to the RuvA family. As to quaternary structure, homotetramer. Forms an RuvA(8)-RuvB(12)-Holliday junction (HJ) complex. HJ DNA is sandwiched between 2 RuvA tetramers; dsDNA enters through RuvA and exits via RuvB. An RuvB hexamer assembles on each DNA strand where it exits the tetramer. Each RuvB hexamer is contacted by two RuvA subunits (via domain III) on 2 adjacent RuvB subunits; this complex drives branch migration. In the full resolvosome a probable DNA-RuvA(4)-RuvB(12)-RuvC(2) complex forms which resolves the HJ.

It is found in the cytoplasm. Functionally, the RuvA-RuvB-RuvC complex processes Holliday junction (HJ) DNA during genetic recombination and DNA repair, while the RuvA-RuvB complex plays an important role in the rescue of blocked DNA replication forks via replication fork reversal (RFR). RuvA specifically binds to HJ cruciform DNA, conferring on it an open structure. The RuvB hexamer acts as an ATP-dependent pump, pulling dsDNA into and through the RuvAB complex. HJ branch migration allows RuvC to scan DNA until it finds its consensus sequence, where it cleaves and resolves the cruciform DNA. The polypeptide is Holliday junction branch migration complex subunit RuvA (Burkholderia cenocepacia (strain ATCC BAA-245 / DSM 16553 / LMG 16656 / NCTC 13227 / J2315 / CF5610) (Burkholderia cepacia (strain J2315))).